The primary structure comprises 603 residues: Probable L-gulonolactone oxidase 6 (603 aa).

The first 35 residues, 1 to 35, serve as a signal peptide directing secretion; that stretch reads MAFTSSPSYGSLNAAFWRTIFVVHCISTLVFTTIS. Residues 64-246 enclose the FAD-binding PCMH-type domain; it reads STCRAANVAY…SQVTLKLQPM (183 aa).

The protein belongs to the oxygen-dependent FAD-linked oxidoreductase family. FAD serves as cofactor.

The catalysed reaction is L-gulono-1,4-lactone + O2 = L-ascorbate + H2O2 + H(+). It functions in the pathway cofactor biosynthesis; L-ascorbate biosynthesis. In terms of biological role, may be involved in the biosynthesis of ascorbic acid. The sequence is that of Probable L-gulonolactone oxidase 6 from Arabidopsis thaliana (Mouse-ear cress).